The sequence spans 340 residues: MGAGSWALTLFGFSAFRVPGQPRSTWLGVAALGLAAVALGTVAWRRARPRRRRRLQQVGTVAQLWIYPIKSCKGLSVSEAECTAMGLRYGHLRDRFWLVINEEGNMVTARQEPRLVLISLTCEDDTLTLSAAYTKDLLLPITPPATNPLLQCRVHGLEIQGRDCGEDAAQWVSSFLKMQSCRLVHFEPHMRPRSSRQMKAVFRTKDQVAYSDASPFLVLSEASLEDLNSRLERRVKATNFRPNIVISGCGVYAEDSWNEVLIGDVELKRVMACTRCLLTTVDPDTGISDRKEPLETLKSYRLCDPSEQALYGKLPIFGQYFALENPGTIRVGDPVYLLGQ.

A lipid anchor (N-myristoyl glycine) is attached at glycine 2. Residues 2–24 (GAGSWALTLFGFSAFRVPGQPRS) lie on the Mitochondrial matrix side of the membrane. The helical; Signal-anchor for type II membrane protein transmembrane segment at 25–44 (TWLGVAALGLAAVALGTVAW) threads the bilayer. At 45 to 340 (RRARPRRRRR…VGDPVYLLGQ (296 aa)) the chain is on the cytoplasmic side. Mo-molybdopterin contacts are provided by lysine 70, serine 71, and arginine 95. Positions 96-186 (FWLVINEEGN…KMQSCRLVHF (91 aa)) are MOSC N-terminal region. In terms of domain architecture, MOSC spans 191-338 (RPRSSRQMKA…IRVGDPVYLL (148 aa)). Residues serine 214, arginine 241, asparagine 243, threonine 274, arginine 275, cysteine 276, and tyrosine 320 each coordinate Mo-molybdopterin.

In terms of assembly, component of a complex composed of cytochrome b5, NADH-cytochrome b5 reductase and MTARC1. It depends on Mo-molybdopterin as a cofactor.

The protein localises to the mitochondrion outer membrane. Its subcellular location is the membrane. It catalyses the reaction N(omega)-hydroxy-L-arginine + 2 Fe(II)-[cytochrome b5] + 2 H(+) = L-arginine + 2 Fe(III)-[cytochrome b5] + H2O. Catalyzes the reduction of N-oxygenated molecules, acting as a counterpart of cytochrome P450 and flavin-containing monooxygenases in metabolic cycles. As a component of prodrug-converting system, reduces a multitude of N-hydroxylated prodrugs particularly amidoximes, leading to increased drug bioavailability. May be involved in mitochondrial N(omega)-hydroxy-L-arginine (NOHA) reduction, regulating endogenous nitric oxide levels and biosynthesis. Postulated to cleave the N-OH bond of N-hydroxylated substrates in concert with electron transfer from NADH to cytochrome b5 reductase then to cytochrome b5, the ultimate electron donor that primes the active site for substrate reduction. This is Mitochondrial amidoxime-reducing component 1 (Mtarc1) from Mus musculus (Mouse).